The chain runs to 207 residues: Superoxide dismutase [Mn] (207 aa).

Residues histidine 28, histidine 76, aspartate 160, and histidine 164 each coordinate Mn(2+).

This sequence belongs to the iron/manganese superoxide dismutase family. It depends on Mn(2+) as a cofactor.

The enzyme catalyses 2 superoxide + 2 H(+) = H2O2 + O2. Destroys superoxide anion radicals which are normally produced within the cells and which are toxic to biological systems. This chain is Superoxide dismutase [Mn] (sodA), found in Mycobacterium leprae (strain TN).